The following is a 775-amino-acid chain: Ankyrin repeat and EF-hand domain-containing protein 1 (775 aa).

8 ANK repeats span residues 47 to 76 (DGLS…HPDV), 184 to 213 (TGRT…EVNA), 217 to 246 (DRHH…DMGL), 250 to 279 (DGNT…DLKW), 524 to 553 (TYKT…NVNA), 557 to 586 (FLWT…SIDA), 590 to 619 (NNST…KFQI), and 623 to 652 (KGHA…NLPK).

The sequence is that of Ankyrin repeat and EF-hand domain-containing protein 1 (Ankef1) from Mus musculus (Mouse).